A 367-amino-acid polypeptide reads, in one-letter code: Aminomethyltransferase (367 aa).

It belongs to the GcvT family. As to quaternary structure, the glycine cleavage system is composed of four proteins: P, T, L and H.

The catalysed reaction is N(6)-[(R)-S(8)-aminomethyldihydrolipoyl]-L-lysyl-[protein] + (6S)-5,6,7,8-tetrahydrofolate = N(6)-[(R)-dihydrolipoyl]-L-lysyl-[protein] + (6R)-5,10-methylene-5,6,7,8-tetrahydrofolate + NH4(+). Functionally, the glycine cleavage system catalyzes the degradation of glycine. The sequence is that of Aminomethyltransferase from Parasynechococcus marenigrum (strain WH8102).